The sequence spans 351 residues: Glycerol-3-phosphate dehydrogenase [NAD(P)+] (351 aa).

Residues serine 18, tryptophan 19, arginine 38, and lysine 122 each contribute to the NADPH site. Positions 122, 153, and 155 each coordinate sn-glycerol 3-phosphate. Alanine 157 is a binding site for NADPH. Sn-glycerol 3-phosphate-binding residues include lysine 208, aspartate 261, serine 271, arginine 272, and asparagine 273. Lysine 208 serves as the catalytic Proton acceptor. Position 272 (arginine 272) interacts with NADPH. Position 297 (glutamate 297) interacts with NADPH.

This sequence belongs to the NAD-dependent glycerol-3-phosphate dehydrogenase family.

It localises to the cytoplasm. The enzyme catalyses sn-glycerol 3-phosphate + NAD(+) = dihydroxyacetone phosphate + NADH + H(+). It carries out the reaction sn-glycerol 3-phosphate + NADP(+) = dihydroxyacetone phosphate + NADPH + H(+). Its pathway is membrane lipid metabolism; glycerophospholipid metabolism. Functionally, catalyzes the reduction of the glycolytic intermediate dihydroxyacetone phosphate (DHAP) to sn-glycerol 3-phosphate (G3P), the key precursor for phospholipid synthesis. This Bordetella bronchiseptica (strain ATCC BAA-588 / NCTC 13252 / RB50) (Alcaligenes bronchisepticus) protein is Glycerol-3-phosphate dehydrogenase [NAD(P)+].